A 291-amino-acid polypeptide reads, in one-letter code: m-AAA protease-interacting protein 1, mitochondrial (291 aa).

The N-terminal 96 residues, 1-96 (MALAARLLPL…SLPASPIRSY (96 aa)), are a transit peptide targeting the mitochondrion.

As to quaternary structure, interacts with AFG3L2. Interacts with SPG7. Interacts with SMDT1/EMRE (via the N-terminal transit peptide); interaction is direct and takes place before maturation of SMDT1/EMRE.

The protein localises to the mitochondrion matrix. Its function is as follows. Promotes sorting of SMDT1/EMRE in mitochondria by ensuring its maturation. Interacts with the transit peptide region of SMDT1/EMRE precursor protein in the mitochondrial matrix, leading to protect it against protein degradation by YME1L1, thereby ensuring SMDT1/EMRE maturation by the mitochondrial processing peptidase (PMPCA and PMPCB). This Rattus norvegicus (Rat) protein is m-AAA protease-interacting protein 1, mitochondrial.